The primary structure comprises 154 residues: Superoxide dismutase [Cu-Zn] (154 aa).

Residues H47, H49, and H64 each coordinate Cu cation. The cysteines at positions 58 and 147 are disulfide-linked. Zn(2+) contacts are provided by H64, H72, H81, and D84. Residue H121 participates in Cu cation binding. Residues 125-136 (DDLGKGGNEESL) show a composition bias toward basic and acidic residues. The tract at residues 125–144 (DDLGKGGNEESLKTGNAGPR) is disordered. R144 provides a ligand contact to substrate.

It belongs to the Cu-Zn superoxide dismutase family. In terms of assembly, homodimer. It depends on Cu cation as a cofactor. Requires Zn(2+) as cofactor.

The protein localises to the cytoplasm. The catalysed reaction is 2 superoxide + 2 H(+) = H2O2 + O2. Destroys radicals which are normally produced within the cells and which are toxic to biological systems. In Candida glabrata (strain ATCC 2001 / BCRC 20586 / JCM 3761 / NBRC 0622 / NRRL Y-65 / CBS 138) (Yeast), this protein is Superoxide dismutase [Cu-Zn] (SOD1).